Consider the following 176-residue polypeptide: Orotate phosphoribosyltransferase (176 aa).

Residues arginine 90, lysine 91, lysine 94, and 116 to 124 (EDVTTTGGS) contribute to the 5-phospho-alpha-D-ribose 1-diphosphate site. Threonine 120 and arginine 148 together coordinate orotate.

It belongs to the purine/pyrimidine phosphoribosyltransferase family. PyrE subfamily. Homodimer. The cofactor is Mg(2+).

The enzyme catalyses orotidine 5'-phosphate + diphosphate = orotate + 5-phospho-alpha-D-ribose 1-diphosphate. It participates in pyrimidine metabolism; UMP biosynthesis via de novo pathway; UMP from orotate: step 1/2. Catalyzes the transfer of a ribosyl phosphate group from 5-phosphoribose 1-diphosphate to orotate, leading to the formation of orotidine monophosphate (OMP). This Methanocaldococcus jannaschii (strain ATCC 43067 / DSM 2661 / JAL-1 / JCM 10045 / NBRC 100440) (Methanococcus jannaschii) protein is Orotate phosphoribosyltransferase.